The following is a 219-amino-acid chain: MGQKVNPHGLRVGVIKDWDSRWYAEKDYADLLHEDFVIREYIENKMKDASVSKVEIERAANRVNISLHTAKPGMVIGKGGSEIESLRKHITKIADGKRVHINVVEVKNADAVAKLVAENIARQLEGRVSFRRAMKQSIQRSMRTGIKGIKTEVSGRLGGADIARSEKYSEGTVPLHTLRADIDYGTAEADTTYGKIGVKVWLYHGEVLPTKNNTAKNAE.

One can recognise a KH type-2 domain in the interval 38–107 (IREYIENKMK…RVHINVVEVK (70 aa)).

It belongs to the universal ribosomal protein uS3 family. In terms of assembly, part of the 30S ribosomal subunit. Forms a tight complex with proteins S10 and S14.

Functionally, binds the lower part of the 30S subunit head. Binds mRNA in the 70S ribosome, positioning it for translation. The chain is Small ribosomal subunit protein uS3 from Exiguobacterium sp. (strain ATCC BAA-1283 / AT1b).